The primary structure comprises 356 residues: Phosphoribosylformylglycinamidine cyclo-ligase (356 aa).

This sequence belongs to the AIR synthase family.

It is found in the cytoplasm. It carries out the reaction 2-formamido-N(1)-(5-O-phospho-beta-D-ribosyl)acetamidine + ATP = 5-amino-1-(5-phospho-beta-D-ribosyl)imidazole + ADP + phosphate + H(+). It functions in the pathway purine metabolism; IMP biosynthesis via de novo pathway; 5-amino-1-(5-phospho-D-ribosyl)imidazole from N(2)-formyl-N(1)-(5-phospho-D-ribosyl)glycinamide: step 2/2. In Nitrobacter hamburgensis (strain DSM 10229 / NCIMB 13809 / X14), this protein is Phosphoribosylformylglycinamidine cyclo-ligase.